Reading from the N-terminus, the 612-residue chain is Kelch repeat and BTB domain-containing protein 3 (612 aa).

The region spanning 52–119 is the BTB domain; the sequence is YDFKIIMKDE…AYTGKTKITD (68 aa). The region spanning 154-254 is the BACK domain; it reads CLQLLSISDS…QLSEETLQDC (101 aa). 5 Kelch repeats span residues 295–341, 343–403, 404–454, 456–506, and 552–599; these read KYIF…SSYG, KIFL…MALD, RLFV…TCQN, IYVL…KAVP, and KIYI…VIQF.

The sequence is that of Kelch repeat and BTB domain-containing protein 3 from Homo sapiens (Human).